Reading from the N-terminus, the 144-residue chain is Gonadotropin subunit beta-2 (144 aa).

An N-terminal signal peptide occupies residues 1–27; that stretch reads MGTPVKILVVRNHILFSVVVLLAVAQS. 6 disulfides stabilise this stretch: cysteine 33/cysteine 81, cysteine 47/cysteine 96, cysteine 50/cysteine 134, cysteine 58/cysteine 112, cysteine 62/cysteine 114, and cysteine 117/cysteine 124. N-linked (GlcNAc...) asparagine glycosylation occurs at asparagine 37. Positions 143-144 are excised as a propeptide; it reads VY.

The protein belongs to the glycoprotein hormones subunit beta family. In terms of assembly, heterodimer of an alpha and a beta chain.

The protein resides in the secreted. In terms of biological role, involved in gametogenesis and steroidogenesis. The sequence is that of Gonadotropin subunit beta-2 (cgbb) from Cyprinus carpio (Common carp).